The primary structure comprises 148 residues: Gametocyte-specific factor 1-like (148 aa).

CHHC U11-48K-type zinc fingers lie at residues 6–33 (FEIC…RRKN) and 40–67 (MATC…VNRS). 8 residues coordinate Zn(2+): cysteine 9, histidine 15, histidine 25, cysteine 29, cysteine 43, histidine 49, histidine 59, and cysteine 63. The interval 67–99 (SAVEEEDTENPLKVSPPSSEQNDDTQQVSPCLP) is disordered. Residues 82-95 (PPSSEQNDDTQQVS) show a composition bias toward polar residues.

Belongs to the UPF0224 (FAM112) family.

The protein is Gametocyte-specific factor 1-like (GTSF1L) of Homo sapiens (Human).